The chain runs to 639 residues: Extracellular metalloproteinase NpIII (639 aa).

The first 16 residues, 1 to 16 (MHMLLFIGALALPVFV), serve as a signal peptide directing secretion. The propeptide occupies 17-245 (CTQSCEPASL…IHGVVDYVSE (229 aa)). Asn287, Asn320, Asn336, and Asn368 each carry an N-linked (GlcNAc...) asparagine glycan. A Zn(2+)-binding site is contributed by His429. Glu430 is an active-site residue. Residue His433 coordinates Zn(2+). Residue Asn509 is glycosylated (N-linked (GlcNAc...) asparagine).

It belongs to the peptidase M36 family. Requires Zn(2+) as cofactor.

It localises to the secreted. Functionally, secreted metalloproteinase that allows assimilation of proteinaceous substrates. The polypeptide is Extracellular metalloproteinase NpIII (NpIII) (Aspergillus oryzae (strain ATCC 42149 / RIB 40) (Yellow koji mold)).